The chain runs to 191 residues: Calcium-activated potassium channel subunit beta-1 (191 aa).

At 2–18 (GKKLVMAQRRGETRALC) the chain is on the cytoplasmic side. Residues 19-39 (LGVAMVVGAVITYYILGTTVL) traverse the membrane as a helical segment. At 40–157 (PLYQKSVWTQ…YRRLYGPQSL (118 aa)) the chain is on the extracellular side. Asn-80 and Asn-142 each carry an N-linked (GlcNAc...) asparagine glycan. The chain crosses the membrane as a helical span at residues 158-178 (LFSLFWPTFLLTGGLLIIVMV). At 179-191 (KINQSLSILAAQR) the chain is on the cytoplasmic side.

Belongs to the KCNMB (TC 8.A.14.1) family. KCNMB1 subfamily. Interacts with KCNMA1 tetramer. There are probably 4 molecules of KCMNB1 per KCNMA1 tetramer. N-glycosylated.

The protein resides in the membrane. Its function is as follows. Regulatory subunit of the calcium activated potassium KCNMA1 (maxiK) channel. Modulates the calcium sensitivity and gating kinetics of KCNMA1, thereby contributing to KCNMA1 channel diversity. Increases the apparent Ca(2+)/voltage sensitivity of the KCNMA1 channel. It also modifies KCNMA1 channel kinetics and alters its pharmacological properties. It slows down the activation and the deactivation kinetics of the channel. Acts as a negative regulator of smooth muscle contraction by enhancing the calcium sensitivity to KCNMA1. Its presence is also a requirement for internal binding of the KCNMA1 channel opener dehydrosoyasaponin I (DHS-1) triterpene glycoside and for external binding of the agonist hormone 17-beta-estradiol (E2). Increases the binding activity of charybdotoxin (CTX) toxin to KCNMA1 peptide blocker by increasing the CTX association rate and decreasing the dissociation rate. This chain is Calcium-activated potassium channel subunit beta-1 (KCNMB1), found in Bos taurus (Bovine).